A 398-amino-acid chain; its full sequence is Stimulator of interferon genes protein (398 aa).

Over 1 to 16 the chain is Cytoplasmic; it reads MSVMGEDALVPRARSR. The helical transmembrane segment at 17 to 37 threads the bilayer; that stretch reads LPVMCAAGLGFLTLAVAWLLD. Over 38–44 the chain is Lumenal; sequence SDKFSER. The helical transmembrane segment at 45–65 threads the bilayer; it reads AGIIAFGLMLERFIYCICLLA. Residues 66–91 lie on the Cytoplasmic side of the membrane; the sequence is EELLFHSRQRYHGRMSEIFRACFRGS. The helical transmembrane segment at 92–112 threads the bilayer; the sequence is GILGMCAIFLMLMLGGVSFSV. Over 113-120 the chain is Lumenal; it reads KQWSHFNL. A helical transmembrane segment spans residues 121-141; sequence MCAGYMLLNSLGVLGPAPVEI. At 142–398 the chain is on the cytoplasmic side; the sequence is SEICEAKKMN…FNPSSAMKQN (257 aa). A cyclic dinucleotide-binding domain (CBD) region spans residues 150–331; the sequence is MNVAHGLAWS…QNLKQQDGEI (182 aa). 2',3'-cGAMP contacts are provided by serine 159, tyrosine 164, arginine 230, and threonine 254. 3',3'-c-di-GMP is bound by residues serine 159, tyrosine 164, 230-233, and threonine 254; that span reads RSYT. The interval 375-398 is disordered; sequence PQSLRSEPVETTDYFNPSSAMKQN. Positions 387–398 are enriched in polar residues; the sequence is DYFNPSSAMKQN.

This sequence belongs to the STING family. In terms of assembly, homodimer; forms a homodimer in absence of cyclic nucleotide (c-di-GMP or cGAMP). Homotetramer; in presence of cyclic nucleotide (c-di-GMP or cGAMP), forms tetramers and higher-order oligomers through side-by-side packing. Interacts (when phosphorylated) with irf3; following activation and phosphorylation by tbk1, recruits irf3. Phosphorylation by TBK1 leads to activation and production of IFN-beta. Following cyclic nucleotide (c-di-GMP or cGAMP)-binding, activation and translocation from the endoplasmic reticulum, STING1 is phosphorylated by tbk1, leading to recruitment of the transcription factor irf3 to induce type-I interferons and other cytokines.

It localises to the endoplasmic reticulum membrane. The protein localises to the cytoplasm. It is found in the perinuclear region. Its subcellular location is the endoplasmic reticulum-Golgi intermediate compartment membrane. The protein resides in the golgi apparatus membrane. It localises to the cytoplasmic vesicle. The protein localises to the autophagosome membrane. It carries out the reaction H(+)(in) = H(+)(out). Functionally, facilitator of innate immune signaling that acts as a sensor of cytosolic DNA from bacteria and viruses and promotes the production of type I interferon (IFN-alpha and IFN-beta). Innate immune response is triggered in response to non-CpG double-stranded DNA from viruses and bacteria delivered to the cytoplasm. Acts by binding cyclic dinucleotides: recognizes and binds cyclic di-GMP (c-di-GMP), a second messenger produced by bacteria, and cyclic GMP-AMP (cGAMP), a messenger produced by CGAS in response to DNA virus in the cytosol. Upon binding of c-di-GMP or cGAMP, STING1 oligomerizes and is able to activate both NF-kappa-B and irf3 transcription pathways to induce expression of type I interferon and exert a potent anti-viral state. Exhibits 2',3' phosphodiester linkage-specific ligand recognition: can bind both 2'-3' linked cGAMP and 3'-3' linked cGAMP but is preferentially activated by 2'-3' linked cGAMP. In addition to promote the production of type I interferons, plays a direct role in autophagy. Following cGAMP-binding, STING1 buds from the endoplasmic reticulum into COPII vesicles, which then form the endoplasmic reticulum-Golgi intermediate compartment (ERGIC). The ERGIC serves as the membrane source for LC3 lipidation, leading to formation of autophagosomes that target cytosolic DNA or DNA viruses for degradation by the lysosome. Promotes autophagy by acting as a proton channel that directs proton efflux from the Golgi to facilitate LC3 lipidation. The autophagy- and interferon-inducing activities can be uncoupled and autophagy induction is independent of TBK1 phosphorylation. The protein is Stimulator of interferon genes protein of Danio rerio (Zebrafish).